The primary structure comprises 463 residues: T-box transcription factor TBX1 (463 aa).

Disordered regions lie at residues 39-58 (SPSP…PCSA) and 75-103 (GASS…PVKK). Low complexity predominate over residues 75–97 (GASSSSCASSTPGSGSTGSSGSS). Residues 119 to 297 (LWDEFNQLGT…SNPFAKGFRD (179 aa)) constitute a DNA-binding region (T-box). Disordered regions lie at residues 320–354 (RSRN…PLHG) and 367–405 (SPSL…LHHH). Over residues 323-332 (NPVSSPPQNG) the composition is skewed to polar residues. Residues 333 to 347 (SDKDGDGRREYERDT) are compositionally biased toward basic and acidic residues. Residues 367–380 (SPSLPVPGGLVPLS) show a composition bias toward low complexity. Positions 420 to 431 (KTRPAPYPLPSI) match the Nuclear localization signal motif.

In terms of assembly, binds DNA as a dimer. Interacts with dscr6/ripply3.

It localises to the nucleus. Its function is as follows. Probable transcriptional regulator involved in developmental processes. Binds to the palindromic T site 5'-TTCACACCTAGGTGTGAA-3' DNA sequence. Induces pre-placodal ectoderm (PPE) gene expression in regions where RIPPLY3 is absent. Plays a role in the formation of the anteroposterior (AP) axis during embryonic development; required to establish the posterolateral border of the pre-placodal ectoderm (PPE) acting downstream of the retinoic acid receptor (RAR) signaling. The sequence is that of T-box transcription factor TBX1 (tbx1) from Xenopus tropicalis (Western clawed frog).